The sequence spans 760 residues: Prolyl endopeptidase FAP (760 aa).

Over 1 to 4 (MKTW) the chain is Cytoplasmic. Residues 5–25 (VKIVFGVATSAVLALLVMCIV) form a helical; Signal-anchor for type II membrane protein membrane-spanning segment. At 26-760 (LRPSRVHNSE…FLKQCFSLSD (735 aa)) the chain is on the extracellular side. Residues asparagine 49, asparagine 92, and asparagine 99 are each glycosylated (N-linked (GlcNAc...) asparagine). Residues glutamate 203 and glutamate 204 each contribute to the substrate site. N-linked (GlcNAc...) asparagine glycans are attached at residues asparagine 227 and asparagine 314. Intrachain disulfides connect cysteine 321/cysteine 332, cysteine 438/cysteine 441, and cysteine 448/cysteine 466. Serine 624 (charge relay system) is an active-site residue. Residues cysteine 643 and cysteine 755 are joined by a disulfide bond. Residue asparagine 679 is glycosylated (N-linked (GlcNAc...) asparagine). Active-site charge relay system residues include aspartate 702 and histidine 734.

This sequence belongs to the peptidase S9B family. As to quaternary structure, homodimer; homodimerization is required for activity of both plasma membrane and soluble forms. The monomer is inactive. Heterodimer with DPP4. Interacts with PLAUR; the interaction occurs at the cell surface of invadopodia membranes. Interacts with ITGB1. Interacts with ITGA3. Associates with integrin alpha-3/beta-1; the association occurs in a collagen-dependent manner at the cell surface of invadopodia membranes. N-glycosylated. In terms of processing, the N-terminus may be blocked. As to expression, expressed in adipose tissue. Expressed in the dermal fibroblasts in the fetal skin. Expressed in the granulation tissue of healing wounds and on reactive stromal fibroblast in epithelial cancers. Expressed in activated fibroblast-like synoviocytes from inflamed synovial tissues. Expressed in activated hepatic stellate cells (HSC) and myofibroblasts from cirrhotic liver, but not detected in normal liver. Expressed in glioma cells (at protein level). Expressed in glioblastomas and glioma cells. Isoform 1 and isoform 2 are expressed in melanoma, carcinoma and fibroblast cell lines.

It is found in the cell surface. Its subcellular location is the cell membrane. The protein localises to the cell projection. The protein resides in the lamellipodium membrane. It localises to the invadopodium membrane. It is found in the ruffle membrane. Its subcellular location is the membrane. The protein localises to the secreted. The protein resides in the cytoplasm. The enzyme catalyses Hydrolysis of Pro-|-Xaa &gt;&gt; Ala-|-Xaa in oligopeptides.. The catalysed reaction is Release of an N-terminal dipeptide, Xaa-Yaa-|-Zaa-, from a polypeptide, preferentially when Yaa is Pro, provided Zaa is neither Pro nor hydroxyproline.. Its activity is regulated as follows. Gelatinase activity is inhibited by serine-protease inhibitors, such as phenylmethylsulfonyl fluoride (PMSF), 4-(2-aminoethyl)-benzenesulfonyl fluoride hydrochloride (AEBSF), 4-amidino phenylsulfonyl fluoride (APSF) and diisopropyl fluorophosphate (DFP), N-ethylmaleimide (NEM) and phenylmethylsulfonyl fluoride (PMSF). Dipeptidyl peptidase activity is inhibited by 2,2'-azino-bis(3-ethylbenzthiazoline-6-sulfonic acid), diisopropylfluorophosphate (DFP). Prolyl endopeptidase activity is inhibited by the boronic acid peptide Ac-Gly-BoroPro, Ac-Gly-Pro-chloromethyl ketone and Thr-Ser-Gly-chloromethyl ketone. In terms of biological role, cell surface glycoprotein serine protease that participates in extracellular matrix degradation and involved in many cellular processes including tissue remodeling, fibrosis, wound healing, inflammation and tumor growth. Both plasma membrane and soluble forms exhibit post-proline cleaving endopeptidase activity, with a marked preference for Ala/Ser-Gly-Pro-Ser/Asn/Ala consensus sequences, on substrate such as alpha-2-antiplasmin SERPINF2 and SPRY2. Degrade also gelatin, heat-denatured type I collagen, but not native collagen type I and IV, vitronectin, tenascin, laminin, fibronectin, fibrin or casein. Also has dipeptidyl peptidase activity, exhibiting the ability to hydrolyze the prolyl bond two residues from the N-terminus of synthetic dipeptide substrates provided that the penultimate residue is proline, with a preference for Ala-Pro, Ile-Pro, Gly-Pro, Arg-Pro and Pro-Pro. Natural neuropeptide hormones for dipeptidyl peptidase are the neuropeptide Y (NPY), peptide YY (PYY), substance P (TAC1) and brain natriuretic peptide 32 (NPPB). The plasma membrane form, in association with either DPP4, PLAUR or integrins, is involved in the pericellular proteolysis of the extracellular matrix (ECM), and hence promotes cell adhesion, migration and invasion through the ECM. Plays a role in tissue remodeling during development and wound healing. Participates in the cell invasiveness towards the ECM in malignant melanoma cancers. Enhances tumor growth progression by increasing angiogenesis, collagen fiber degradation and apoptosis and by reducing antitumor response of the immune system. Promotes glioma cell invasion through the brain parenchyma by degrading the proteoglycan brevican. Acts as a tumor suppressor in melanocytic cells through regulation of cell proliferation and survival in a serine protease activity-independent manner. This Homo sapiens (Human) protein is Prolyl endopeptidase FAP.